The chain runs to 339 residues: Terpene synthase 9 (339 aa).

The DDxx(x)D/E motif signature appears at 79 to 84 (DDFLES). Residues 219-227 (NDCASYAKE) carry the NDxxSxxxD/E motif motif.

This sequence belongs to the terpene synthase family.

It catalyses the reaction (2E,6E)-farnesyl diphosphate = (-)-beta-barbatene + diphosphate. The catalysed reaction is (2E,6E)-farnesyl diphosphate = (E)-beta-farnesene + diphosphate. It carries out the reaction (2E)-geranyl diphosphate = (Z)-beta-ocimene + diphosphate. The enzyme catalyses (2E)-geranyl diphosphate + H2O = linalool + diphosphate. It catalyses the reaction (2E)-geranyl diphosphate = beta-myrcene + diphosphate. Functionally, terpene synthase that converts its substrate farnesyl diphosphate (FPP) into the sesquiterpene beta-barbatene as a major product as well as (E)-beta-farnesene as a minor product. Is also able to convert geranyl diphosphate (GPP) into a mixture of monoterpenes including (Z)-beta-ocimene, linalool, beta-myrcene, limonene and alpha-terpineol. This Dictyostelium discoideum (Social amoeba) protein is Terpene synthase 9.